A 103-amino-acid polypeptide reads, in one-letter code: Histone H4.2 (103 aa).

The span at 1 to 14 shows a compositional bias: gly residues; sequence MSGRGKGGKGLGKG. The disordered stretch occupies residues 1–20; sequence MSGRGKGGKGLGKGGAKRHR. Lysine 6 is modified (N6-acetyl-N6-methyllysine; alternate). 3 positions are modified to N6-methyllysine; alternate: lysine 6, lysine 9, and lysine 13. Position 13 is an N6-acetyl-N6-methyllysine; alternate (lysine 13). Residues 17 to 21 mediate DNA binding; it reads KRHRK. Residue lysine 92 is modified to N6-glutaryllysine.

The protein belongs to the histone H4 family. As to quaternary structure, the nucleosome is a histone octamer containing two molecules each of H2A, H2B, H3 and H4 assembled in one H3-H4 heterotetramer and two H2A-H2B heterodimers. The octamer wraps approximately 147 bp of DNA. Glutarylation at Lys-92 (H4K91glu) destabilizes nucleosomes by promoting dissociation of the H2A-H2B dimers from nucleosomes.

It is found in the nucleus. The protein resides in the chromosome. In terms of biological role, core component of nucleosome. Nucleosomes wrap and compact DNA into chromatin, limiting DNA accessibility to the cellular machineries which require DNA as a template. Histones thereby play a central role in transcription regulation, DNA repair, DNA replication and chromosomal stability. DNA accessibility is regulated via a complex set of post-translational modifications of histones, also called histone code, and nucleosome remodeling. The polypeptide is Histone H4.2 (hhfB) (Emericella nidulans (strain FGSC A4 / ATCC 38163 / CBS 112.46 / NRRL 194 / M139) (Aspergillus nidulans)).